Reading from the N-terminus, the 172-residue chain is NAD(P)H-quinone oxidoreductase subunit J (172 aa).

Belongs to the complex I 30 kDa subunit family. As to quaternary structure, NDH-1 can be composed of about 15 different subunits; different subcomplexes with different compositions have been identified which probably have different functions.

The protein resides in the cellular thylakoid membrane. It catalyses the reaction a plastoquinone + NADH + (n+1) H(+)(in) = a plastoquinol + NAD(+) + n H(+)(out). The enzyme catalyses a plastoquinone + NADPH + (n+1) H(+)(in) = a plastoquinol + NADP(+) + n H(+)(out). Functionally, NDH-1 shuttles electrons from an unknown electron donor, via FMN and iron-sulfur (Fe-S) centers, to quinones in the respiratory and/or the photosynthetic chain. The immediate electron acceptor for the enzyme in this species is believed to be plastoquinone. Couples the redox reaction to proton translocation, and thus conserves the redox energy in a proton gradient. Cyanobacterial NDH-1 also plays a role in inorganic carbon-concentration. The polypeptide is NAD(P)H-quinone oxidoreductase subunit J (Synechococcus elongatus (strain ATCC 33912 / PCC 7942 / FACHB-805) (Anacystis nidulans R2)).